A 508-amino-acid chain; its full sequence is UTP--glucose-1-phosphate uridylyltransferase (508 aa).

At serine 2 the chain carries N-acetylserine. A phosphoserine mark is found at serine 2 and serine 13. UTP is bound by residues 113–116 (LNGG), lysine 127, glutamine 190, and glycine 222. 115-116 (GG) provides a ligand contact to substrate. Lysine 127 lines the Mg(2+) pocket. Residues histidine 223, 251–253 (NID), and asparagine 330 each bind substrate. Aspartate 253 is a binding site for UTP. Aspartate 253 provides a ligand contact to Mg(2+). Lysine 396 serves as a coordination point for UTP. Lysine 396 is a catalytic residue. Threonine 426 carries the phosphothreonine modification. At serine 434 the chain carries Phosphoserine. At lysine 438 the chain carries N6-acetyllysine. Phosphoserine is present on residues serine 448 and serine 461. The interval 457 to 508 (HLTVSGDVTFGKNVSLKGTVIIIANHGDRIDIPPGAVLENKIVSGNLRILDH) is oligomerization. Residues 502 to 503 (NL) are critical for end-to-end subunit interaction.

This sequence belongs to the UDPGP type 1 family. Homooctamer. As to expression, highly expressed in various brain regions. Expressed in amygdala, anterior cingulate cortex, caudate, cerebellar hemisphere, cerebellum, cortex, frontal cortex, hippocampus, hypothalamus, nucleus accumbens, putamen, spinal cord and substantia nigra. Also widely expressed among other tissues, including liver, heart, placenta, lung, kidney, pancreas and skeletal muscle.

It is found in the cytoplasm. The catalysed reaction is alpha-D-glucose 1-phosphate + UTP + H(+) = UDP-alpha-D-glucose + diphosphate. It participates in glycan biosynthesis; glycogen biosynthesis. In terms of biological role, UTP--glucose-1-phosphate uridylyltransferase catalyzing the conversion of glucose-1-phosphate into UDP-glucose, a crucial precursor for the production of glycogen. In Homo sapiens (Human), this protein is UTP--glucose-1-phosphate uridylyltransferase.